Here is a 685-residue protein sequence, read N- to C-terminus: DNA topoisomerase 4 subunit B (685 aa).

A compositionally biased stretch (basic and acidic residues) spans 389-400 (EAARKAREESRN). The segment at 389–427 (EAARKAREESRNGKKRKKGESLLSGKLTPAQSRNPKKNE) is disordered. Residues 426–540 (NELYLVEGDS…AGKVYIALPP (115 aa)) form the Toprim domain. Mg(2+) contacts are provided by E432, D505, and D507. Composition is skewed to acidic residues over residues 644–654 (GSILDRSEEDT) and 673–685 (QTDD…FDIE). Positions 644 to 685 (GSILDRSEEDTSAPTGESLLDAEKTKEAEQTDDTEISLFDIE) are disordered.

This sequence belongs to the type II topoisomerase family. ParE type 1 subfamily. Heterotetramer composed of ParC and ParE. Mg(2+) is required as a cofactor. The cofactor is Mn(2+). Ca(2+) serves as cofactor.

It carries out the reaction ATP-dependent breakage, passage and rejoining of double-stranded DNA.. With respect to regulation, pyrrolopyrimidines inhibit both GyrB and its paralog in topoisomerase IV (parE). In terms of biological role, topoisomerase IV is essential for chromosome segregation. It relaxes supercoiled DNA. Performs the decatenation events required during the replication of a circular DNA molecule. In Enterococcus faecalis (strain ATCC 700802 / V583), this protein is DNA topoisomerase 4 subunit B.